The following is a 368-amino-acid chain: Propane 2-monooxygenase, hydroxylase component small subunit (368 aa).

This sequence belongs to the TmoE/XamoE family. As to quaternary structure, the propane 2-monooxygenase multicomponent enzyme system is composed of an electron transfer component and a monooxygenase component interacting with the effector protein PrmD. The electron transfer component is composed of a reductase (PrmB), and the monooxygenase component is formed by a large subunit (PrmA) and a small subunit (PrmC). Probably requires the presence of the chaperonin-like protein PrmG to ensure a productive folding, resulting of a soluble PrmC, which leads to the active form of PrmABCD.

It catalyses the reaction propane + NADH + O2 + H(+) = propan-2-ol + NAD(+) + H2O. Component of the propane 2-monooxygenase multicomponent enzyme system which is involved in the degradation of propane via the O2-dependent hydroxylation of propane. Also able to catalyze the oxidation the water contaminant N-nitrosodimethylamine (NDMA). This Rhodococcus jostii (strain RHA1) protein is Propane 2-monooxygenase, hydroxylase component small subunit.